A 266-amino-acid polypeptide reads, in one-letter code: Apolipoprotein A-I (266 aa).

Residues 1–18 form the signal peptide; that stretch reads MKAVVLTLAVLFLTGSQA. Repeat copies occupy residues 67-88 and 89-110. Residues 67 to 266 form a 10 X approximate tandem repeats region; that stretch reads LKLLDNWDTL…DEATKKLNAQ (200 aa). Met-109 is modified (methionine sulfoxide). A 3; half-length repeat occupies 111–121; that stretch reads KDLEEVKQKVQ. 5 tandem repeats follow at residues 122-143, 144-165, 166-187, 188-209, and 210-231. The stretch at 232–242 is one 9; half-length repeat; it reads PALEDLRQGLL. Repeat unit 10 spans residues 243 to 266; sequence PVLESFKVGLMAIVDEATKKLNAQ.

The protein belongs to the apolipoprotein A1/A4/E family. Homodimer. Interacts with APOA1BP and CLU. Component of a sperm activating protein complex (SPAP), consisting of APOA1, an immunoglobulin heavy chain, an immunoglobulin light chain and albumin. Interacts with NDRG1. Interacts with SCGB3A2. Interacts with NAXE and YJEFN3. In terms of processing, glycosylated. Post-translationally, palmitoylated. Phosphorylation sites are present in the extracellular medium.

It is found in the secreted. In terms of biological role, participates in the reverse transport of cholesterol from tissues to the liver for excretion by promoting cholesterol efflux from tissues and by acting as a cofactor for the lecithin cholesterol acyltransferase (LCAT). As part of the SPAP complex, activates spermatozoa motility. The polypeptide is Apolipoprotein A-I (APOA1) (Acinonyx jubatus (Cheetah)).